Here is a 293-residue protein sequence, read N- to C-terminus: Ribosomal protein L11 methyltransferase (293 aa).

S-adenosyl-L-methionine contacts are provided by Thr-145, Gly-166, Asp-188, and Asn-230.

It belongs to the methyltransferase superfamily. PrmA family.

It is found in the cytoplasm. The catalysed reaction is L-lysyl-[protein] + 3 S-adenosyl-L-methionine = N(6),N(6),N(6)-trimethyl-L-lysyl-[protein] + 3 S-adenosyl-L-homocysteine + 3 H(+). In terms of biological role, methylates ribosomal protein L11. This chain is Ribosomal protein L11 methyltransferase, found in Yersinia pseudotuberculosis serotype O:3 (strain YPIII).